Reading from the N-terminus, the 176-residue chain is ATP-dependent protease subunit HslV (176 aa).

Residue T2 is part of the active site. 3 residues coordinate Na(+): G157, C160, and T163.

The protein belongs to the peptidase T1B family. HslV subfamily. In terms of assembly, a double ring-shaped homohexamer of HslV is capped on each side by a ring-shaped HslU homohexamer. The assembly of the HslU/HslV complex is dependent on binding of ATP.

Its subcellular location is the cytoplasm. The catalysed reaction is ATP-dependent cleavage of peptide bonds with broad specificity.. Allosterically activated by HslU binding. Its function is as follows. Protease subunit of a proteasome-like degradation complex believed to be a general protein degrading machinery. The protein is ATP-dependent protease subunit HslV of Salmonella agona (strain SL483).